The following is a 161-amino-acid chain: Sterile alpha motif domain-containing protein 12 (161 aa).

Residues 44–64 (QKVPDQKGTPKRLQGEAETAK) are disordered. An SAM domain is found at 77–143 (WTQQDVCKWL…LQQVLQLKVR (67 aa)).

This is Sterile alpha motif domain-containing protein 12 (Samd12) from Mus musculus (Mouse).